The following is a 1325-amino-acid chain: MVVFLSKNVRSLLSIFKKKGQKQDEQRKLTVHYTASQHYQENVFIEGSRPKYLEDLHTEAQEGLKILQQEEEDTSSKERNESLENDSTSGHSIISVSTASAVSTRPVLTRQGSTFKPLNPVKRLDKSKRRSRRTTIMGIPQQVQRELDMARGTMLQQLPNRGHDSEDDSSGTVVLQTIDGDLPSVNHEGARVHLQNIEVLQASRDEDLLLNHIHSVYQDELNRKLGLGACPTQRPKSLAVPGMTTYSFLQEPQGPVMSISPQATYLSKIIPNAVLPAAIDIIEINHDHNRCSASTASKGSMASASPSSSRSGSGTNQAPPTTSPSRSNSQSSETIVSNSSTISSKGKCLPTFDADSAKDISVLIPKDMSVSSSSSWKSSEGKGTNHRLNPREYGDAGDNVRNSHSFSRSLSVMKTKLPPAPPQRTYSLHHENMQRQREQGDIQDPKDVAPNNNEQTNRDISSTKENHQSAKNKKSSVHSLELRSDFHTTVKSSPLSPDQVFTGRHARSGNSSPQKTRECGENFDRTLSPSSGYSSQSGTPTHSPKEVSPSSPGKRRVKPSKPERVCAKTSPVVSVSSSLTSLSSVISDTAHQDIQTNTTSSEPLKFSPPLTTVKNKVTPTHQTIALRTLFNIPPPPKVKAPSPPPPETWVQNKQTLELLCGPGPNIHKLESLISKTQNKNSMQINEQVIPKTQTTEETKTENTVVKELTKSASPQVHKQMMVEPPDVRHTEKSILHNELKSPETLAKVNQIPHTQDEKTIEDQKDRWSQTLPTTNVPSIIVDQSMLSQTNSIEKTKAATVSSNENQRNCIVTDIVNRISVQTLNIEVPEVNGVSPPPSPPPEHHPPPPPIKKMSDMSVSIPPSEKEEQKQVEQVTFPESSWPPPPPPMEESTELMFEEQDELDFPPPPPSFIHEPMSEISDDFHEESCEEVSIKLLSTNVSDMDSSPEQDSERHTILPKRIVQNSVEVRQQDKSSDSVSEFLEDQAEIENTNVASTIISSHLPDKNLHEKETLVSTSIPLAPPLPVEEQSTINFRKQLSFVDKDNRSKELLCRHKSTPIPKEDANIPLVTPSLLQMVRLRSVNVGEDQVNNDSKPSTEPTTNEDHSISSQVTPQKPIRRSLTLKSNSPAKSSSASSAVPSMCLQEAIRMKTAAMSCSGVPAMLNLRSSSGSSATSPVPSPKSPDGCDLLMSPASTASFIFSKSTKRVVIETPTSPDVQASLKQSLAAEIMQVSDQAKTMITNGTKKPIKVPPPVAKKPVHGSNPPNKMENATQDKTEILTNKQIMRVDVNGQSDQVHPAGQRAQSLGNQEQASKEAFAMNMSICA.

Residues 53 to 85 (LEDLHTEAQEGLKILQQEEEDTSSKERNESLEN) adopt a coiled-coil conformation. 10 disordered regions span residues 68 to 92 (QQEEEDTSSKERNESLENDSTSGHS), 111 to 131 (QGSTFKPLNPVKRLDKSKRRS), 291 to 348 (CSAS…KGKC), 368 to 570 (MSVS…AKTS), 595 to 614 (QTNTTSSEPLKFSPPLTTVK), 829 to 891 (EVNG…MEES), 935 to 981 (LLST…VSEF), 1084 to 1138 (VGED…SSAV), 1243 to 1272 (GTKKPIKVPPPVAKKPVHGSNPPNKMENAT), and 1293 to 1313 (SDQVHPAGQRAQSLGNQEQAS). Positions 296-334 (ASKGSMASASPSSSRSGSGTNQAPPTTSPSRSNSQSSET) are enriched in low complexity. The segment covering 335–344 (IVSNSSTISS) has biased composition (polar residues). Positions 369–378 (SVSSSSSWKS) are enriched in low complexity. Residues 400 to 412 (VRNSHSFSRSLSV) show a composition bias toward polar residues. Positions 428-447 (LHHENMQRQREQGDIQDPKD) are enriched in basic and acidic residues. Positions 450-460 (PNNNEQTNRDI) are enriched in polar residues. Basic and acidic residues predominate over residues 515-524 (KTRECGENFD). The segment covering 528 to 541 (SPSSGYSSQSGTPT) has biased composition (low complexity). The segment covering 834–850 (SPPPSPPPEHHPPPPPI) has biased composition (pro residues). Polar residues-rich tracts occupy residues 935-948 (LLSTNVSDMDSSPE) and 1088-1100 (QVNNDSKPSTEPT). The segment covering 1124–1138 (KSNSPAKSSSASSAV) has biased composition (low complexity). Residues 1302–1311 (RAQSLGNQEQ) show a composition bias toward polar residues.

Its function is as follows. Able to directly activate the TNF-NFkappaB signaling pathway. This is NHS-like protein 3 (nhsl3) from Danio rerio (Zebrafish).